Consider the following 355-residue polypeptide: Protein RecA (355 aa).

65–72 serves as a coordination point for ATP; the sequence is GPESSGKT.

It belongs to the RecA family.

It is found in the cytoplasm. Its function is as follows. Can catalyze the hydrolysis of ATP in the presence of single-stranded DNA, the ATP-dependent uptake of single-stranded DNA by duplex DNA, and the ATP-dependent hybridization of homologous single-stranded DNAs. It interacts with LexA causing its activation and leading to its autocatalytic cleavage. In Pseudomonas putida (strain W619), this protein is Protein RecA.